A 277-amino-acid chain; its full sequence is Phosphoenolpyruvate synthase regulatory protein (277 aa).

Residue 157 to 164 (GVSRCGKT) participates in ADP binding.

It belongs to the pyruvate, phosphate/water dikinase regulatory protein family. PSRP subfamily.

It catalyses the reaction [pyruvate, water dikinase] + ADP = [pyruvate, water dikinase]-phosphate + AMP + H(+). The enzyme catalyses [pyruvate, water dikinase]-phosphate + phosphate + H(+) = [pyruvate, water dikinase] + diphosphate. Its function is as follows. Bifunctional serine/threonine kinase and phosphorylase involved in the regulation of the phosphoenolpyruvate synthase (PEPS) by catalyzing its phosphorylation/dephosphorylation. The polypeptide is Phosphoenolpyruvate synthase regulatory protein (Escherichia coli O17:K52:H18 (strain UMN026 / ExPEC)).